The following is a 193-amino-acid chain: Ion-translocating oxidoreductase complex subunit A (193 aa).

Transmembrane regions (helical) follow at residues 5-25 (LLLF…FLGL), 39-59 (IGMG…AWMV), 62-82 (FILL…LVIA), 102-122 (LLGI…VALL), 134-154 (AVYG…FAAI), and 171-191 (SIAL…TGLV).

It belongs to the NqrDE/RnfAE family. As to quaternary structure, the complex is composed of six subunits: RnfA, RnfB, RnfC, RnfD, RnfE and RnfG.

It localises to the cell inner membrane. Functionally, part of a membrane-bound complex that couples electron transfer with translocation of ions across the membrane. In Yersinia enterocolitica serotype O:8 / biotype 1B (strain NCTC 13174 / 8081), this protein is Ion-translocating oxidoreductase complex subunit A.